The following is a 315-amino-acid chain: Ribosomal RNA small subunit methyltransferase H (315 aa).

S-adenosyl-L-methionine contacts are provided by residues 37–39 (GGH), aspartate 57, phenylalanine 83, aspartate 105, and glutamine 112.

It belongs to the methyltransferase superfamily. RsmH family.

It localises to the cytoplasm. The enzyme catalyses cytidine(1402) in 16S rRNA + S-adenosyl-L-methionine = N(4)-methylcytidine(1402) in 16S rRNA + S-adenosyl-L-homocysteine + H(+). Its function is as follows. Specifically methylates the N4 position of cytidine in position 1402 (C1402) of 16S rRNA. The polypeptide is Ribosomal RNA small subunit methyltransferase H (Pseudomonas putida (strain GB-1)).